Here is a 282-residue protein sequence, read N- to C-terminus: Protoheme IX farnesyltransferase (282 aa).

The next 8 membrane-spanning stretches (helical) occupy residues 40–60 (LVLA…FNMV), 87–107 (AVLA…AVNP), 108–128 (YVFV…TVLL), 135–157 (SVVF…ATGG), 162–184 (GVLL…STYY), 204–224 (AGVV…FLAF), 228–248 (LISA…VAVL), and 261–281 (AYRA…LLVL).

This sequence belongs to the UbiA prenyltransferase family. Protoheme IX farnesyltransferase subfamily.

Its subcellular location is the cell membrane. The catalysed reaction is heme b + (2E,6E)-farnesyl diphosphate + H2O = Fe(II)-heme o + diphosphate. The protein operates within porphyrin-containing compound metabolism; heme O biosynthesis; heme O from protoheme: step 1/1. Converts heme B (protoheme IX) to heme O by substitution of the vinyl group on carbon 2 of heme B porphyrin ring with a hydroxyethyl farnesyl side group. This Thermofilum pendens (strain DSM 2475 / Hrk 5) protein is Protoheme IX farnesyltransferase.